Consider the following 414-residue polypeptide: Arginine deiminase (414 aa).

The Amidino-cysteine intermediate role is filled by cysteine 402.

Belongs to the arginine deiminase family.

Its subcellular location is the cytoplasm. It carries out the reaction L-arginine + H2O = L-citrulline + NH4(+). It participates in amino-acid degradation; L-arginine degradation via ADI pathway; carbamoyl phosphate from L-arginine: step 1/2. The polypeptide is Arginine deiminase (Oenococcus oeni (strain ATCC BAA-331 / PSU-1)).